A 310-amino-acid chain; its full sequence is Ribosomal protein uL3 glutamine methyltransferase (310 aa).

This sequence belongs to the protein N5-glutamine methyltransferase family. PrmB subfamily.

It catalyses the reaction L-glutaminyl-[ribosomal protein uL3] + S-adenosyl-L-methionine = N(5)-methyl-L-glutaminyl-[ribosomal protein uL3] + S-adenosyl-L-homocysteine + H(+). Its function is as follows. Methylates large ribosomal subunit protein uL3 on a specific glutamine residue. The chain is Ribosomal protein uL3 glutamine methyltransferase from Yersinia pestis.